Here is a 285-residue protein sequence, read N- to C-terminus: Probable ribosomal RNA small subunit methyltransferase A (285 aa).

Positions 29, 31, 58, 79, 107, and 122 each coordinate S-adenosyl-L-methionine.

This sequence belongs to the class I-like SAM-binding methyltransferase superfamily. rRNA adenine N(6)-methyltransferase family. RsmA subfamily.

Its subcellular location is the cytoplasm. Its function is as follows. Specifically dimethylates two adjacent adenosines in the loop of a conserved hairpin near the 3'-end of 16S rRNA in the 30S particle. May play a critical role in biogenesis of 30S subunits. The polypeptide is Probable ribosomal RNA small subunit methyltransferase A (Haloarcula marismortui (strain ATCC 43049 / DSM 3752 / JCM 8966 / VKM B-1809) (Halobacterium marismortui)).